Reading from the N-terminus, the 247-residue chain is V-type proton ATPase subunit D (247 aa).

Belongs to the V-ATPase D subunit family. As to quaternary structure, V-ATPase is a heteromultimeric enzyme made up of two complexes: the ATP-hydrolytic V1 complex and the proton translocation V0 complex. The V1 complex consists of three catalytic AB heterodimers that form a heterohexamer, three peripheral stalks each consisting of EG heterodimers, one central rotor including subunits D and F, and the regulatory subunits C and H. The proton translocation complex V0 consists of the proton transport subunit a, a ring of proteolipid subunits c9c'', rotary subunit d, subunits e and f, and the accessory subunits ATP6AP1/Ac45 and ATP6AP2/PRR. Interacts with SNX10. As to expression, expressed in brain (at protein level). Present in tissues active in secretion. Amounts elevated in brain, kidney and testis.

Its subcellular location is the membrane. It localises to the cytoplasmic vesicle. It is found in the clathrin-coated vesicle membrane. The protein resides in the cytoplasm. The protein localises to the cytoskeleton. Its subcellular location is the microtubule organizing center. It localises to the centrosome. It is found in the cell projection. The protein resides in the cilium. Functionally, subunit of the V1 complex of vacuolar(H+)-ATPase (V-ATPase), a multisubunit enzyme composed of a peripheral complex (V1) that hydrolyzes ATP and a membrane integral complex (V0) that translocates protons. V-ATPase is responsible for acidifying and maintaining the pH of intracellular compartments and in some cell types, is targeted to the plasma membrane, where it is responsible for acidifying the extracellular environment. May play a role in cilium biogenesis through regulation of the transport and the localization of proteins to the cilium. The sequence is that of V-type proton ATPase subunit D (ATP6V1D) from Bos taurus (Bovine).